The following is a 127-amino-acid chain: Small ribosomal subunit protein uS11 (127 aa).

It belongs to the universal ribosomal protein uS11 family. Part of the 30S ribosomal subunit. Interacts with proteins S7 and S18. Binds to IF-3.

Functionally, located on the platform of the 30S subunit, it bridges several disparate RNA helices of the 16S rRNA. Forms part of the Shine-Dalgarno cleft in the 70S ribosome. This is Small ribosomal subunit protein uS11 from Anaeromyxobacter dehalogenans (strain 2CP-C).